The chain runs to 394 residues: Phosphoglycerate kinase (394 aa).

Residues 21-23 (DFN), R36, 59-62 (HLGR), R118, and R151 each bind substrate. S183 is modified (phosphoserine). An ATP-binding site is contributed by K201. A Phosphothreonine modification is found at T299. Residues E323 and 350–353 (GGDS) contribute to the ATP site.

This sequence belongs to the phosphoglycerate kinase family. In terms of assembly, monomer.

It localises to the cytoplasm. The catalysed reaction is (2R)-3-phosphoglycerate + ATP = (2R)-3-phospho-glyceroyl phosphate + ADP. The protein operates within carbohydrate degradation; glycolysis; pyruvate from D-glyceraldehyde 3-phosphate: step 2/5. In Geobacillus kaustophilus (strain HTA426), this protein is Phosphoglycerate kinase.